A 571-amino-acid polypeptide reads, in one-letter code: Dihydroxy-acid dehydratase (571 aa).

Position 56 (C56) interacts with [2Fe-2S] cluster. D88 contacts Mg(2+). Residue C129 coordinates [2Fe-2S] cluster. D130 and K131 together coordinate Mg(2+). At K131 the chain carries N6-carboxylysine. Position 201 (C201) interacts with [2Fe-2S] cluster. A Mg(2+)-binding site is contributed by E452. The active-site Proton acceptor is S478.

Belongs to the IlvD/Edd family. In terms of assembly, homodimer. Requires [2Fe-2S] cluster as cofactor. Mg(2+) serves as cofactor.

The catalysed reaction is (2R)-2,3-dihydroxy-3-methylbutanoate = 3-methyl-2-oxobutanoate + H2O. The enzyme catalyses (2R,3R)-2,3-dihydroxy-3-methylpentanoate = (S)-3-methyl-2-oxopentanoate + H2O. It participates in amino-acid biosynthesis; L-isoleucine biosynthesis; L-isoleucine from 2-oxobutanoate: step 3/4. Its pathway is amino-acid biosynthesis; L-valine biosynthesis; L-valine from pyruvate: step 3/4. Its function is as follows. Functions in the biosynthesis of branched-chain amino acids. Catalyzes the dehydration of (2R,3R)-2,3-dihydroxy-3-methylpentanoate (2,3-dihydroxy-3-methylvalerate) into 2-oxo-3-methylpentanoate (2-oxo-3-methylvalerate) and of (2R)-2,3-dihydroxy-3-methylbutanoate (2,3-dihydroxyisovalerate) into 2-oxo-3-methylbutanoate (2-oxoisovalerate), the penultimate precursor to L-isoleucine and L-valine, respectively. The chain is Dihydroxy-acid dehydratase from Streptococcus mutans serotype c (strain ATCC 700610 / UA159).